The following is a 125-amino-acid chain: Ribosome-binding factor A (125 aa).

This sequence belongs to the RbfA family. Monomer. Binds 30S ribosomal subunits, but not 50S ribosomal subunits or 70S ribosomes.

It localises to the cytoplasm. One of several proteins that assist in the late maturation steps of the functional core of the 30S ribosomal subunit. Associates with free 30S ribosomal subunits (but not with 30S subunits that are part of 70S ribosomes or polysomes). Required for efficient processing of 16S rRNA. May interact with the 5'-terminal helix region of 16S rRNA. This chain is Ribosome-binding factor A, found in Wigglesworthia glossinidia brevipalpis.